The following is a 793-amino-acid chain: Phenylalanine--tRNA ligase beta subunit (793 aa).

One can recognise a tRNA-binding domain in the interval A39–R148. The region spanning P400–I476 is the B5 domain. Mg(2+) is bound by residues D454, D460, E463, and E464. Positions S698–R791 constitute an FDX-ACB domain.

This sequence belongs to the phenylalanyl-tRNA synthetase beta subunit family. Type 1 subfamily. As to quaternary structure, tetramer of two alpha and two beta subunits. Mg(2+) serves as cofactor.

It is found in the cytoplasm. The catalysed reaction is tRNA(Phe) + L-phenylalanine + ATP = L-phenylalanyl-tRNA(Phe) + AMP + diphosphate + H(+). This Acinetobacter baylyi (strain ATCC 33305 / BD413 / ADP1) protein is Phenylalanine--tRNA ligase beta subunit.